Here is a 458-residue protein sequence, read N- to C-terminus: COBRA-like protein 2 (458 aa).

The N-terminal stretch at 1–29 (MARFLLGAAAIALLAGVSSLLLMVPFAEA) is a signal peptide. N-linked (GlcNAc...) asparagine glycosylation is found at asparagine 38, asparagine 163, asparagine 171, asparagine 211, asparagine 236, asparagine 318, asparagine 333, and asparagine 352. The chain crosses the membrane as a helical span at residues 430–450 (VFLLMSFLVCGTLAFLHNHLV).

This sequence belongs to the COBRA family.

The protein localises to the membrane. The polypeptide is COBRA-like protein 2 (BC1L2) (Oryza sativa subsp. japonica (Rice)).